The sequence spans 363 residues: Replication factor C subunit 4 (363 aa).

An N-acetylmethionine modification is found at M1. The interval 1 to 36 (MQAFLKGTSISTKPPLTKDRGVAASAGSSGENKKAK) is disordered. Residues K6 and K13 each carry the N6-acetyllysine modification. Residue 78–85 (GPPGTGKT) coordinates ATP.

The protein belongs to the activator 1 small subunits family. Subunit of the RFC complex, an heteropentameric complex consisting of a large subunit RFC1 and four small subunits RFC2, RFC3, RFC4 and RFC5; the RFC complex interacts with PCNA. Forms an heterotetrameric complex with RFC2, RFC3 and RFC5; this complex has ATPase activity but is not stimulated by PCNA. The heterotetramer of subunits RFC2, RFC3, RFC4 and RFC5 interacts with RAD17. Interacts with ATAD5. Interacts with CTF18. Interacts with CNTD1; this interaction facilitates crossover formation.

It is found in the nucleus. Subunit of the replication factor C (RFC) complex which acts during elongation of primed DNA templates by DNA polymerases delta and epsilon, and is necessary for ATP-dependent loading of proliferating cell nuclear antigen (PCNA) onto primed DNA. The RFC4 subunit probably functions as a scaffold on which the other complex components can assemble. The protein is Replication factor C subunit 4 (RFC4) of Homo sapiens (Human).